A 257-amino-acid polypeptide reads, in one-letter code: Acetylglutamate kinase (257 aa).

Residues Gly43–Gly44, Arg65, and Asn157 each bind substrate. Residues Asp180 to Leu185 and Ile208 to Thr210 contribute to the ATP site.

Belongs to the acetylglutamate kinase family. ArgB subfamily. Homodimer.

Its subcellular location is the cytoplasm. It carries out the reaction N-acetyl-L-glutamate + ATP = N-acetyl-L-glutamyl 5-phosphate + ADP. It functions in the pathway amino-acid biosynthesis; L-arginine biosynthesis; N(2)-acetyl-L-ornithine from L-glutamate: step 2/4. Catalyzes the ATP-dependent phosphorylation of N-acetyl-L-glutamate. The polypeptide is Acetylglutamate kinase (Edwardsiella ictaluri (strain 93-146)).